Here is a 247-residue protein sequence, read N- to C-terminus: Uroporphyrinogen-III C-methyltransferase (247 aa).

S-adenosyl-L-homocysteine-binding positions include Pro-12, 117–118, Met-168, Ala-197, and Ala-225; that span reads TA.

The protein belongs to the precorrin methyltransferase family.

It carries out the reaction uroporphyrinogen III + 2 S-adenosyl-L-methionine = precorrin-2 + 2 S-adenosyl-L-homocysteine + H(+). It participates in cofactor biosynthesis; adenosylcobalamin biosynthesis; precorrin-2 from uroporphyrinogen III: step 1/1. It functions in the pathway porphyrin-containing compound metabolism; siroheme biosynthesis; precorrin-2 from uroporphyrinogen III: step 1/1. Functionally, catalyzes the two successive C-2 and C-7 methylation reactions involved in the conversion of uroporphyrinogen III to precorrin-2 via the intermediate formation of precorrin-1. It is a step in the biosynthesis of both cobalamin (vitamin B12) and siroheme. The chain is Uroporphyrinogen-III C-methyltransferase from Pseudomonas fluorescens.